Consider the following 518-residue polypeptide: Metalloprotease TIKI2 (518 aa).

An N-terminal signal peptide occupies residues 1–22; sequence MNCQSGLRWLVTLCAFFQVGSA. Residues 23–499 lie on the Extracellular side of the membrane; that stretch reads RDTHESTRQC…SALDSAAPNP (477 aa). 5 N-linked (GlcNAc...) asparagine glycosylation sites follow: N224, N233, N282, N325, and N340. The helical transmembrane segment at 500–517 threads the bilayer; it reads TYALTCFLACLISQLLFA. A topological domain (cytoplasmic) is located at residue S518.

The protein belongs to the TIKI family. Mn(2+) is required as a cofactor. The cofactor is Co(2+).

It localises to the cell membrane. In terms of biological role, metalloprotease that acts as a negative regulator of the Wnt signaling pathway by mediating the cleavage of the N-terminal residues of a subset of Wnt proteins. Following cleavage, Wnt proteins become oxidized and form large disulfide-bond oligomers, leading to their inactivation. This is Metalloprotease TIKI2 (trabd2b) from Danio rerio (Zebrafish).